The primary structure comprises 349 residues: MTNITLQKQHRTLWHFIPGLALSAVITGVALWGGSIPAVAGAGFSALTLAILLGMVLGNTIYPHIWKSCDGGVLFAKQYLLRLGIILYGFRLTFSQIADVGISGIIIDVLTLSSTFLLACFLGQKVFGLDKHTSWLIGAGSSICGAAAVLATEPVVKAEASKVTVAVATVVIFGTVAIFLYPAIYPLMSQWFSPETFGIYIGSTVHEVAQVVAAGHAISPDAENAAVISKMLRVMMLAPFLILLAARVKQLSGANSGEKSKITIPWFAILFIVVAIFNSFHLLPQSVVNMLVTLDTFLLAMAMAALGLTTHVSALKKAGAKPLLMALVLFAWLIVGGGAINYVIQSVIA.

At 1–12 the chain is on the periplasmic side; the sequence is MTNITLQKQHRT. Residues 13–32 form a helical membrane-spanning segment; that stretch reads LWHFIPGLALSAVITGVALW. The Cytoplasmic portion of the chain corresponds to 33 to 35; the sequence is GGS. Residues 36–58 form a helical membrane-spanning segment; it reads IPAVAGAGFSALTLAILLGMVLG. Residues 59-99 are Periplasmic-facing; sequence NTIYPHIWKSCDGGVLFAKQYLLRLGIILYGFRLTFSQIAD. Residues 100-122 traverse the membrane as a helical segment; it reads VGISGIIIDVLTLSSTFLLACFL. Over 123–131 the chain is Cytoplasmic; sequence GQKVFGLDK. A helical transmembrane segment spans residues 132-151; that stretch reads HTSWLIGAGSSICGAAAVLA. Residues 152–162 are Periplasmic-facing; that stretch reads TEPVVKAEASK. The chain crosses the membrane as a helical span at residues 163–185; the sequence is VTVAVATVVIFGTVAIFLYPAIY. The Cytoplasmic segment spans residues 186 to 261; the sequence is PLMSQWFSPE…SGANSGEKSK (76 aa). The helical transmembrane segment at 262-283 threads the bilayer; it reads ITIPWFAILFIVVAIFNSFHLL. At 284-289 the chain is on the periplasmic side; that stretch reads PQSVVN. A helical transmembrane segment spans residues 290-312; the sequence is MLVTLDTFLLAMAMAALGLTTHV. The Cytoplasmic segment spans residues 313-321; it reads SALKKAGAK. The chain crosses the membrane as a helical span at residues 322–344; it reads PLLMALVLFAWLIVGGGAINYVI. Residues 345–349 are Periplasmic-facing; the sequence is QSVIA.

Belongs to the UPF0324 family.

The protein localises to the cell inner membrane. The polypeptide is UPF0324 inner membrane protein YeiH (yeiH) (Escherichia coli O157:H7).